A 185-amino-acid chain; its full sequence is Ribosome maturation factor RimP (185 aa).

The interval 162–185 (VRLERAADGAPERGGDRGDTEESR) is disordered.

It belongs to the RimP family.

It localises to the cytoplasm. Its function is as follows. Required for maturation of 30S ribosomal subunits. The polypeptide is Ribosome maturation factor RimP (Saccharopolyspora erythraea (strain ATCC 11635 / DSM 40517 / JCM 4748 / NBRC 13426 / NCIMB 8594 / NRRL 2338)).